The sequence spans 268 residues: Phosphatidylglycerol--prolipoprotein diacylglyceryl transferase (268 aa).

7 consecutive transmembrane segments (helical) span residues 27–47 (PALR…MWLL), 66–86 (LLFY…VLFY), 104–124 (GGMS…YIAW), 130–150 (FFAV…AGRI), 181–201 (PSQL…LYWF), 208–228 (VGAV…IVET), and 242–262 (FMTM…YLIL). R149 lines the a 1,2-diacyl-sn-glycero-3-phospho-(1'-sn-glycerol) pocket.

This sequence belongs to the Lgt family.

The protein localises to the cell inner membrane. The enzyme catalyses L-cysteinyl-[prolipoprotein] + a 1,2-diacyl-sn-glycero-3-phospho-(1'-sn-glycerol) = an S-1,2-diacyl-sn-glyceryl-L-cysteinyl-[prolipoprotein] + sn-glycerol 1-phosphate + H(+). The protein operates within protein modification; lipoprotein biosynthesis (diacylglyceryl transfer). In terms of biological role, catalyzes the transfer of the diacylglyceryl group from phosphatidylglycerol to the sulfhydryl group of the N-terminal cysteine of a prolipoprotein, the first step in the formation of mature lipoproteins. The sequence is that of Phosphatidylglycerol--prolipoprotein diacylglyceryl transferase from Shewanella sp. (strain MR-4).